Consider the following 162-residue polypeptide: Large ribosomal subunit protein bL17 (162 aa).

A disordered region spans residues 126-162; sequence ATAKKATRTRRSKKSAAATEAPAAPAAETTEEAPKAE. The segment covering 130-139 has biased composition (basic residues); sequence KATRTRRSKK. Residues 140–153 show a composition bias toward low complexity; that stretch reads SAAATEAPAAPAAE.

The protein belongs to the bacterial ribosomal protein bL17 family. In terms of assembly, part of the 50S ribosomal subunit. Contacts protein L32.

In Phocaeicola vulgatus (strain ATCC 8482 / DSM 1447 / JCM 5826 / CCUG 4940 / NBRC 14291 / NCTC 11154) (Bacteroides vulgatus), this protein is Large ribosomal subunit protein bL17.